The following is a 496-amino-acid chain: Probable cytosol aminopeptidase (496 aa).

Mn(2+) contacts are provided by Lys257 and Asp262. Lys269 is an active-site residue. 3 residues coordinate Mn(2+): Asp281, Asp341, and Glu343. Arg345 is an active-site residue.

The protein belongs to the peptidase M17 family. The cofactor is Mn(2+).

The protein resides in the cytoplasm. The catalysed reaction is Release of an N-terminal amino acid, Xaa-|-Yaa-, in which Xaa is preferably Leu, but may be other amino acids including Pro although not Arg or Lys, and Yaa may be Pro. Amino acid amides and methyl esters are also readily hydrolyzed, but rates on arylamides are exceedingly low.. The enzyme catalyses Release of an N-terminal amino acid, preferentially leucine, but not glutamic or aspartic acids.. Its function is as follows. Presumably involved in the processing and regular turnover of intracellular proteins. Catalyzes the removal of unsubstituted N-terminal amino acids from various peptides. The polypeptide is Probable cytosol aminopeptidase (Prochlorococcus marinus (strain SARG / CCMP1375 / SS120)).